The sequence spans 384 residues: S-adenosylmethionine synthase (384 aa).

Residue histidine 15 coordinates ATP. A Mg(2+)-binding site is contributed by aspartate 17. Glutamate 43 is a K(+) binding site. L-methionine contacts are provided by glutamate 56 and glutamine 99. Residues 99 to 109 form a flexible loop region; that stretch reads QSPDINQGVDK. Residues 164 to 166, 230 to 231, aspartate 239, 245 to 246, alanine 262, and lysine 266 each bind ATP; these read DAK, RF, and RK. Position 239 (aspartate 239) interacts with L-methionine. Lysine 270 lines the L-methionine pocket.

It belongs to the AdoMet synthase family. Homotetramer; dimer of dimers. Mg(2+) serves as cofactor. K(+) is required as a cofactor.

It localises to the cytoplasm. It carries out the reaction L-methionine + ATP + H2O = S-adenosyl-L-methionine + phosphate + diphosphate. The protein operates within amino-acid biosynthesis; S-adenosyl-L-methionine biosynthesis; S-adenosyl-L-methionine from L-methionine: step 1/1. In terms of biological role, catalyzes the formation of S-adenosylmethionine (AdoMet) from methionine and ATP. The overall synthetic reaction is composed of two sequential steps, AdoMet formation and the subsequent tripolyphosphate hydrolysis which occurs prior to release of AdoMet from the enzyme. The chain is S-adenosylmethionine synthase from Aliivibrio fischeri (strain ATCC 700601 / ES114) (Vibrio fischeri).